The sequence spans 1683 residues: A-kinase anchor protein SPHKAP (1683 aa).

Polar residues-rich tracts occupy residues 1–14 (MDVN…SNVE) and 289–301 (AENT…NPSA). 3 disordered regions span residues 1–30 (MDVN…ITSS), 275–320 (RMPS…ATNY), and 582–601 (LLPT…LVTE). Residues 910–927 (FAEELAETVVSMATEIAA) are PKA-RII subunit binding domain. The segment at 960–983 (LKRKKENSGTGSTVRKHKPPRLSE) is disordered. Phosphoserine is present on residues Ser-1006, Ser-1066, Ser-1088, Ser-1101, Ser-1102, Ser-1105, Ser-1240, and Ser-1269. Disordered regions lie at residues 1359-1387 (VTEG…PTRE) and 1415-1518 (ETDQ…DTSS). Residues 1362-1371 (GNCSPVSSPS) show a composition bias toward polar residues. The segment covering 1469–1490 (LETREELEVDVLKEDITLDESR) has biased composition (basic and acidic residues). Residues 1492–1504 (PPSSSEESTGSWS) show a composition bias toward low complexity.

Belongs to the AKAP110 family. As to quaternary structure, interacts (via the PKA-RII subunit binding domain) with the RI subunit of PKA. Interacts with SPHK1; the interaction greatly reduces SPHK1 activity. Abundant in heart ventricle (at protein level).

Its subcellular location is the cytoplasm. Functionally, anchoring protein that binds preferentially to the type I regulatory subunit of c-AMP-dependent protein kinase (PKA type I) and targets it to distinct subcellular compartments. May act as a converging factor linking cAMP and sphingosine signaling pathways. Plays a regulatory role in the modulation of SPHK1. This Rattus norvegicus (Rat) protein is A-kinase anchor protein SPHKAP (Sphkap).